The following is a 402-amino-acid chain: Pentalenic acid synthase (402 aa).

The disordered stretch occupies residues 1 to 28 (MTEPGTSVSAPVAFPQDRTCPYDPPTAY). Position 351 (C351) interacts with heme.

It belongs to the cytochrome P450 family. The cofactor is heme.

It carries out the reaction 1-deoxypentalenate + reduced 2[4Fe-4S]-[ferredoxin] + O2 + 2 H(+) = pentalenate + oxidized 2[4Fe-4S]-[ferredoxin] + H2O. It participates in antibiotic biosynthesis; neopentalenolactone biosynthesis. Its function is as follows. Catalyzes the conversion of 1-deoxypentalenic acid to pentalenic acid in the biosynthesis of neopentalenolactone antibiotic. This is Pentalenic acid synthase (cyp28) from Streptomyces avermitilis (strain ATCC 31267 / DSM 46492 / JCM 5070 / NBRC 14893 / NCIMB 12804 / NRRL 8165 / MA-4680).